The primary structure comprises 183 residues: Protein jagunal homolog 1 (183 aa).

Topologically, residues 1–39 are cytoplasmic; sequence MASRAGPRAAGTDGSDFQHRERVAMHYQMSVTLKYEIKK. S3 carries the post-translational modification Phosphoserine. A helical transmembrane segment spans residues 40 to 60; that stretch reads LIYVHLVIWLLLVAKMSVGHL. Over 61–71 the chain is Lumenal; it reads RLLSHDQVAMP. The helical transmembrane segment at 72-92 threads the bilayer; that stretch reads YQWEYPYLLSVVPSLLGLLSF. Topologically, residues 93–96 are cytoplasmic; it reads PRNN. The helical transmembrane segment at 97 to 117 threads the bilayer; that stretch reads ISYLVLSMISMGLFSIAPLIY. Residues 118–137 lie on the Lumenal side of the membrane; the sequence is GSMEMFPAAQQLYRHGKAYR. The helical transmembrane segment at 138–158 threads the bilayer; it reads FLFGFSAVSVMYLVLVLAVQV. At 159–183 the chain is on the cytoplasmic side; sequence HAWQLYYSKKLLDSWFTSTQEKKRK.

Belongs to the jagunal family. In terms of assembly, interacts with COPA, COPB2 and COPG2.

Its subcellular location is the endoplasmic reticulum membrane. Functionally, endoplasmic reticulum transmembrane protein involved in vesicle-mediated transport, which is required for neutrophil function. Required for vesicle-mediated transport; it is however unclear whether it is involved in early secretory pathway or intracellular protein transport. Acts as a regulator of neutrophil function, probably via its role in vesicle-mediated transport: required for defense against fungal pathogens and for granulocyte colony-stimulating factor (GM-CSF) signaling pathway; possibly by regulating glycosylation and/or targeting of proteins contributing to the viability and migration of neutrophils. In Bos taurus (Bovine), this protein is Protein jagunal homolog 1 (JAGN1).